A 125-amino-acid chain; its full sequence is Large ribosomal subunit protein bL12 (125 aa).

The protein belongs to the bacterial ribosomal protein bL12 family. As to quaternary structure, homodimer. Part of the ribosomal stalk of the 50S ribosomal subunit. Forms a multimeric L10(L12)X complex, where L10 forms an elongated spine to which 2 to 4 L12 dimers bind in a sequential fashion. Binds GTP-bound translation factors.

Functionally, forms part of the ribosomal stalk which helps the ribosome interact with GTP-bound translation factors. Is thus essential for accurate translation. In Chelativorans sp. (strain BNC1), this protein is Large ribosomal subunit protein bL12.